Reading from the N-terminus, the 232-residue chain is MKAGIIGAMEEEVTLLRDKIDNRQTLTIAGCEIYTGTLNGVDVALLKSGIGKVSAAMGATLLLEHCKPDVIINTGSAGGLAPSLKVGDIVVSDEVRYHDADVTAFGYEYGQMAGCPAAFKADEKLIAAAQETIEKLNLHAVRGLVVSGDAFINGSVNLAKIRHNFPQAIAVEMEATAIGHVCHNFGVPFVVVRAISDVADQQSHLSFEEFLAVAAKQSSLMVETLLTSLNRG.

The Proton acceptor role is filled by glutamate 12. Substrate-binding positions include glycine 78, isoleucine 152, and 173–174 (ME). Residue aspartate 197 is the Proton donor of the active site.

This sequence belongs to the PNP/UDP phosphorylase family. MtnN subfamily. In terms of assembly, homodimer.

The enzyme catalyses S-adenosyl-L-homocysteine + H2O = S-(5-deoxy-D-ribos-5-yl)-L-homocysteine + adenine. It carries out the reaction S-methyl-5'-thioadenosine + H2O = 5-(methylsulfanyl)-D-ribose + adenine. It catalyses the reaction 5'-deoxyadenosine + H2O = 5-deoxy-D-ribose + adenine. It functions in the pathway amino-acid biosynthesis; L-methionine biosynthesis via salvage pathway; S-methyl-5-thio-alpha-D-ribose 1-phosphate from S-methyl-5'-thioadenosine (hydrolase route): step 1/2. Functionally, catalyzes the irreversible cleavage of the glycosidic bond in both 5'-methylthioadenosine (MTA) and S-adenosylhomocysteine (SAH/AdoHcy) to adenine and the corresponding thioribose, 5'-methylthioribose and S-ribosylhomocysteine, respectively. Also cleaves 5'-deoxyadenosine, a toxic by-product of radical S-adenosylmethionine (SAM) enzymes, into 5-deoxyribose and adenine. Thus, is required for in vivo function of the radical SAM enzymes biotin synthase and lipoic acid synthase, that are inhibited by 5'-deoxyadenosine accumulation. This Cronobacter sakazakii (strain ATCC BAA-894) (Enterobacter sakazakii) protein is 5'-methylthioadenosine/S-adenosylhomocysteine nucleosidase.